Here is a 272-residue protein sequence, read N- to C-terminus: HTH-type transcriptional repressor AllR (272 aa).

Residues 1–20 (MTEVRRRGRPGQAEPTAQKG) are disordered. Positions 21-83 (AQALERGIAI…SQLGWWHIGL (63 aa)) constitute an HTH iclR-type domain. Positions 43–62 (VSDISGSLDLPLSTTFRLLK) form a DNA-binding region, H-T-H motif. The IclR-ED domain maps to 98-267 (VLSVAGPFMH…AKDISTALGL (170 aa)). Glyoxylate contacts are provided by residues 154-156 (SGA), Asp207, Cys217, and 234-236 (SIS).

Functionally, negative regulator of allantoin and glyoxylate utilization operons. Binds to the gcl promoter and to the allS-allA intergenic region. The sequence is that of HTH-type transcriptional repressor AllR (allR) from Salmonella typhi.